Here is a 335-residue protein sequence, read N- to C-terminus: DNA-directed RNA polymerase subunit alpha (335 aa).

The tract at residues 1-233 (MIRDKISVSI…DLFIPFLHGE (233 aa)) is alpha N-terminal domain (alpha-NTD). The interval 264–335 (KEKIAFKHIF…KRFAIDPPRN (72 aa)) is alpha C-terminal domain (alpha-CTD).

It belongs to the RNA polymerase alpha chain family. As to quaternary structure, in plastids the minimal PEP RNA polymerase catalytic core is composed of four subunits: alpha, beta, beta', and beta''. When a (nuclear-encoded) sigma factor is associated with the core the holoenzyme is formed, which can initiate transcription.

The protein resides in the plastid. It is found in the chloroplast. The enzyme catalyses RNA(n) + a ribonucleoside 5'-triphosphate = RNA(n+1) + diphosphate. Its function is as follows. DNA-dependent RNA polymerase catalyzes the transcription of DNA into RNA using the four ribonucleoside triphosphates as substrates. The chain is DNA-directed RNA polymerase subunit alpha from Pinus koraiensis (Korean pine).